A 185-amino-acid polypeptide reads, in one-letter code: Peptidyl-tRNA hydrolase (185 aa).

Tyr14 contacts tRNA. The active-site Proton acceptor is the His19. The tRNA site is built by Tyr65, Asn67, and Asn113.

It belongs to the PTH family. Monomer.

It localises to the cytoplasm. It catalyses the reaction an N-acyl-L-alpha-aminoacyl-tRNA + H2O = an N-acyl-L-amino acid + a tRNA + H(+). Its function is as follows. Hydrolyzes ribosome-free peptidyl-tRNAs (with 1 or more amino acids incorporated), which drop off the ribosome during protein synthesis, or as a result of ribosome stalling. Functionally, catalyzes the release of premature peptidyl moieties from peptidyl-tRNA molecules trapped in stalled 50S ribosomal subunits, and thus maintains levels of free tRNAs and 50S ribosomes. The chain is Peptidyl-tRNA hydrolase from Rickettsia canadensis (strain McKiel).